Here is a 351-residue protein sequence, read N- to C-terminus: Anthranilate phosphoribosyltransferase (351 aa).

5-phospho-alpha-D-ribose 1-diphosphate-binding positions include G92, 95–96 (GD), T100, 102–105 (NIST), 120–128 (KHGNRAASS), and S132. Residue G92 coordinates anthranilate. S104 is a Mg(2+) binding site. N123 provides a ligand contact to anthranilate. R178 contributes to the anthranilate binding site. Mg(2+) contacts are provided by D236 and E237.

The protein belongs to the anthranilate phosphoribosyltransferase family. As to quaternary structure, homodimer. It depends on Mg(2+) as a cofactor.

It catalyses the reaction N-(5-phospho-beta-D-ribosyl)anthranilate + diphosphate = 5-phospho-alpha-D-ribose 1-diphosphate + anthranilate. It functions in the pathway amino-acid biosynthesis; L-tryptophan biosynthesis; L-tryptophan from chorismate: step 2/5. Its function is as follows. Catalyzes the transfer of the phosphoribosyl group of 5-phosphorylribose-1-pyrophosphate (PRPP) to anthranilate to yield N-(5'-phosphoribosyl)-anthranilate (PRA). The protein is Anthranilate phosphoribosyltransferase of Deinococcus geothermalis (strain DSM 11300 / CIP 105573 / AG-3a).